The primary structure comprises 95 residues: UPF0235 protein PTH_1821 (95 aa).

It belongs to the UPF0235 family.

In Pelotomaculum thermopropionicum (strain DSM 13744 / JCM 10971 / SI), this protein is UPF0235 protein PTH_1821.